The sequence spans 152 residues: Heavy metal-associated isoprenylated plant protein 20 (152 aa).

The HMA domain maps to 27-90; sequence MQTVNIKVKM…RIERTGKKAE (64 aa). Cd(2+)-binding residues include Cys38 and Cys41. Cys149 carries the post-translational modification Cysteine methyl ester. Cys149 is lipidated: S-farnesyl cysteine. Residues 150-152 constitute a propeptide, removed in mature form; it reads TVM.

It belongs to the HIPP family. In terms of assembly, interacts with ZHD11/HB29. Expressed in roots, shoot apical meristem, leaves and flowers.

It is found in the membrane. Functionally, heavy-metal-binding protein. Binds cadmium. May be involved in cadmium transport and play a role in cadmium detoxification. The protein is Heavy metal-associated isoprenylated plant protein 20 of Arabidopsis thaliana (Mouse-ear cress).